The sequence spans 115 residues: Histone H2A-Bbd type 1 (115 aa).

The segment at 1 to 21 is disordered; the sequence is MPRRRRRRGSSGAGGRGRTCS. The interval 87–115 is docking domain; it reads LLDMVVHNDRLLSTLFNTTTISQVAPGED.

It belongs to the histone H2A family. As to quaternary structure, the nucleosome is a histone octamer containing two molecules each of H2A, H2B, H3 and H4 assembled in one H3-H4 heterotetramer and two H2A-H2B heterodimers. May be incorporated into a proportion of nucleosomes, replacing one or more H2A molecules. As to expression, present in mature sperm.

The protein resides in the nucleus. The protein localises to the chromosome. Functionally, atypical histone H2A which can replace conventional H2A in some nucleosomes and is associated with active transcription and mRNA processing. Nucleosomes wrap and compact DNA into chromatin, limiting DNA accessibility to the cellular machineries which require DNA as a template. Histones thereby play a central role in transcription regulation, DNA repair, DNA replication and chromosomal stability. Nucleosomes containing this histone are less rigid and organize less DNA than canonical nucleosomes in vivo. They are enriched in actively transcribed genes and associate with the elongating form of RNA polymerase. They associate with spliceosome components and are required for mRNA splicing. The sequence is that of Histone H2A-Bbd type 1 from Homo sapiens (Human).